A 96-amino-acid chain; its full sequence is UPF0125 protein YfjF (96 aa).

Belongs to the UPF0125 (RnfH) family.

The polypeptide is UPF0125 protein YfjF (yfjF) (Escherichia coli O157:H7).